A 124-amino-acid polypeptide reads, in one-letter code: MEQLVYIALLGALGCLCRYFLSGFVYQVFGTSFPYGTLAVNLIGAFLIGLIMEFSVRSAAIPPTLRFAITIGFLGGLTTFSTFSFETFRLLEDGALLIAIVNVLVSVVACLTCTWIGIMVARAL.

Helical transmembrane passes span 5 to 25 (VYIA…SGFV), 32 to 52 (SFPY…GLIM), 67 to 87 (FAIT…SFET), and 96 to 116 (LLIA…CTWI). Na(+)-binding residues include Gly75 and Thr78.

This sequence belongs to the fluoride channel Fluc/FEX (TC 1.A.43) family.

The protein localises to the cell inner membrane. The catalysed reaction is fluoride(in) = fluoride(out). With respect to regulation, na(+) is not transported, but it plays an essential structural role and its presence is essential for fluoride channel function. In terms of biological role, fluoride-specific ion channel. Important for reducing fluoride concentration in the cell, thus reducing its toxicity. The protein is Fluoride-specific ion channel FluC of Citrifermentans bemidjiense (strain ATCC BAA-1014 / DSM 16622 / JCM 12645 / Bem) (Geobacter bemidjiensis).